A 326-amino-acid chain; its full sequence is N-acetyl-gamma-glutamyl-phosphate reductase (326 aa).

Cys-155 is a catalytic residue.

Belongs to the NAGSA dehydrogenase family. Type 1 subfamily.

The protein resides in the cytoplasm. It catalyses the reaction N-acetyl-L-glutamate 5-semialdehyde + phosphate + NADP(+) = N-acetyl-L-glutamyl 5-phosphate + NADPH + H(+). It participates in amino-acid biosynthesis; L-arginine biosynthesis; N(2)-acetyl-L-ornithine from L-glutamate: step 3/4. Its function is as follows. Catalyzes the NADPH-dependent reduction of N-acetyl-5-glutamyl phosphate to yield N-acetyl-L-glutamate 5-semialdehyde. This is N-acetyl-gamma-glutamyl-phosphate reductase from Shewanella denitrificans (strain OS217 / ATCC BAA-1090 / DSM 15013).